The sequence spans 669 residues: Potassium voltage-gated channel subfamily KQT member 1 (669 aa).

Residues 1–120 (MDTASSPPNA…YNFLERPTGW (120 aa)) lie on the Cytoplasmic side of the membrane. At S27 the chain carries Phosphoserine; by PKA. A helical membrane pass occupies residues 121–142 (KCFVYHFTVFLIVLVCLIFSVL). Over 143–153 (STIEQYAALAT) the chain is Extracellular. A helical membrane pass occupies residues 154 to 176 (GTLFWMEIVLVVFFGTEYVVRLW). Residues 177–192 (SAGCRSKYVGIWGRLR) are Cytoplasmic-facing. The chain crosses the membrane as a helical span at residues 193-218 (FARKPISIIDLIVVVASMVVLCVGSK). The Extracellular segment spans residues 219-226 (GQVFATSA). Residues 227–242 (IRGIRFLQILRMLHVD) traverse the membrane as a helical; Voltage-sensor segment. The tract at residues 238-246 (MLHVDRQGG) is interaction with KCNE3. Residues 243–260 (RQGGTWRLLGSVVFIHRQ) lie on the Cytoplasmic side of the membrane. Position 244 (Q244) interacts with a 1,2-diacyl-sn-glycero-3-phospho-(1D-myo-inositol-4,5-bisphosphate). The chain crosses the membrane as a helical span at residues 261 to 283 (ELITTLYIGFLGLIFSSYFVYLA). Topologically, residues 284 to 299 (EKDAVNESGRIEFGSY) are extracellular. A glycan (N-linked (GlcNAc...) asparagine) is linked at N289. Positions 300–320 (ADALWWGVVTVTTIGYGDKVP) form an intramembrane region, pore-forming. Residues 321-322 (QT) lie on the Extracellular side of the membrane. Residues 323-348 (WVGKTIASCFSVFAISFFALPAGILG) traverse the membrane as a helical segment. The Cytoplasmic segment spans residues 349-669 (SGFALKVQQK…VPQTGPDEGS (321 aa)). The segment at 370–382 (AAASLIQTAWRCY) is interaction with CALM. Phosphoserine is present on residues S407 and S409. Positions 515–529 (KVIRRMQYFVAKKKF) are interaction with CALM; calcium-dependent. The tract at residues 535–572 (PYDVRDVIEQYSQGHLNLMVRIKELQRRLDQSIGKPSL) is interaction with KCNE1 C-terminus. Positions 585 to 621 (SNTIGARLNRVEDKVTQLDQRLVIITDMLHQLLSLQQ) form a coiled coil. An interaction with AKAP9 region spans residues 588–616 (IGARLNRVEDKVTQLDQRLVIITDMLHQL). The C-terminal assembly domain (tetramerization) stretch occupies residues 589–620 (GARLNRVEDKVTQLDQRLVIITDMLHQLLSLQ).

The protein belongs to the potassium channel family. KQT (TC 1.A.1.15) subfamily. Kv7.1/KCNQ1 sub-subfamily. Tetramer. Heterotetramer with KCNE1; targets to the membrane raft. Interacts (via C-terminus) with CALM; forms a heterooctameric structure (with 4:4 KCNQ1:CALM stoichiometry) in a calcium-independent manner. Interacts with AKAP9; targets protein kinase A (PKA) catalytic and regulatory subunits and protein phosphatase 1 (PP1) to the KCNQ1-KCNE1 complex, allowing PKA-mediated phosphorylation and increase of delayed rectifier potassium channel activity. Interacts with KCNE2; form a heterooligomer complex that targets to the membrane raft and leading to currents with an apparently instantaneous activation, a rapid deactivation process and a linear current-voltage relationship and decreases the amplitude of the outward current. Interacts with AP2M1; mediates estrogen-induced internalization via clathrin-coated vesicles. Interacts with NEDD4L; promotes internalization and decreases I(Ks) currents. Interacts with USP2; counteracts the NEDD4L-specific down-regulation of I(Ks) and restore plasma membrane localization. Heterotetramer with KCNQ5; has a voltage-gated potassium channel activity. Interacts with KCNE3; produces a current with nearly instantaneous activation with a linear current-voltage relationship and alters membrane raft localization. Interacts with KCNE4; impairs KCNQ1 localization in lipid rafts and inhibits voltage-gated potassium channel activity. Interacts with KCNE5; impairs KCNQ1 localization in lipid rafts and only conducts current upon strong and continued depolarization. Interacts with SLC5A3; forms coregulatory channel-transporter complexes that modulate Na(+)-coupled myo-inositol influx through the transporter. Phosphorylation at Ser-27 by PKA; increases delayed rectifier potassium channel activity of the KCNQ1-KCNE1 complex through a macromolecular complex that includes PKA, PP1, and the targeting protein AKAP9. In terms of processing, ubiquitinated by NEDD4L; promotes internalization. The ubiquitinylated form is internalized through a clathrin-mediated endocytosis by interacting with AP2M1 and is recycled back to the cell membrane via RAB4A and RAB11A. Post-translationally, deubiquitinated by USP2; counteracts the NEDD4L-specific down-regulation of I(Ks) and restores the membrane localization.

The protein resides in the cell membrane. It is found in the cytoplasmic vesicle membrane. The protein localises to the early endosome. It localises to the membrane raft. Its subcellular location is the endoplasmic reticulum. The protein resides in the basolateral cell membrane. It is found in the apical cell membrane. It carries out the reaction K(+)(in) = K(+)(out). PIP2 molecule is essential to activate KCNQ channels by inducing the coupling of the voltage-sensing domain (VSD) and the pore-forming domain (PD). Upon channel activation, PIP2 disrupts the VSD-calmodulin/CALM interactions, causing the release of CALM from the VSD which triggers the opening of the gate. Calcium potentiates KCNQ1 channel current through calcium-bound CALM. Calcium-bound CALM competes with PIP2 to stabilize the channel open state. Functionally, pore-forming subunit of the voltage-gated potassium (Kv) channel involved in the regulation of cardiomyocyte excitability and important in normal development and functions of myocardium, inner ear, stomach and colon. Associates with KCNE beta subunits that modulates current kinetics. Induces a voltage-dependent by rapidly activating and slowly deactivating potassium-selective outward current. Also promotes a delayed voltage activated potassium current showing outward rectification characteristic. During beta-adrenergic receptor stimulation participates in cardiac repolarization by associating with KCNE1 to form the I(Ks) cardiac potassium current that increases the amplitude and slows down the activation kinetics of outward potassium current I(Ks). Muscarinic agonist oxotremorine-M strongly suppresses KCNQ1/KCNE1 current. When associated with KCNE3, forms the potassium channel that is important for cyclic AMP-stimulated intestinal secretion of chloride ions. This interaction with KCNE3 is reduced by 17beta-estradiol, resulting in the reduction of currents. During conditions of increased substrate load, maintains the driving force for proximal tubular and intestinal sodium ions absorption, gastric acid secretion, and cAMP-induced jejunal chloride ions secretion. Allows the provision of potassium ions to the luminal membrane of the secretory canaliculus in the resting state as well as during stimulated acid secretion. When associated with KCNE2, forms a heterooligomer complex leading to currents with an apparently instantaneous activation, a rapid deactivation process and a linear current-voltage relationship and decreases the amplitude of the outward current. When associated with KCNE4, inhibits voltage-gated potassium channel activity. When associated with KCNE5, this complex only conducts current upon strong and continued depolarization. Also forms a heterotetramer with KCNQ5 that has a voltage-gated potassium channel activity. Binds with phosphatidylinositol 4,5-bisphosphate. KCNQ1-KCNE2 channel associates with Na(+)-coupled myo-inositol symporter in the apical membrane of choroid plexus epithelium and regulates the myo-inositol gradient between blood and cerebrospinal fluid with an impact on neuron excitability. The chain is Potassium voltage-gated channel subfamily KQT member 1 from Rattus norvegicus (Rat).